Here is a 53-residue protein sequence, read N- to C-terminus: Sec-independent protein translocase protein TatA (53 aa).

The chain crosses the membrane as a helical span at residues 1 to 21 (MGMSVSHLLIVLLIIFVLFGA).

This sequence belongs to the TatA/E family. In terms of assembly, the Tat system comprises two distinct complexes: a TatABC complex, containing multiple copies of TatA, TatB and TatC subunits, and a separate TatA complex, containing only TatA subunits. Substrates initially bind to the TatABC complex, which probably triggers association of the separate TatA complex to form the active translocon.

It localises to the cell inner membrane. Part of the twin-arginine translocation (Tat) system that transports large folded proteins containing a characteristic twin-arginine motif in their signal peptide across membranes. TatA could form the protein-conducting channel of the Tat system. This chain is Sec-independent protein translocase protein TatA, found in Rickettsia massiliae (strain Mtu5).